Consider the following 350-residue polypeptide: Dihydroorotate dehydrogenase (quinone) (350 aa).

FMN is bound by residues 61-65 and T85; that span reads AGLDK. Residue K65 participates in substrate binding. 110-114 is a substrate binding site; the sequence is NRMGF. Residues N139 and N172 each coordinate FMN. N172 contributes to the substrate binding site. Residue S175 is the Nucleophile of the active site. N177 serves as a coordination point for substrate. 2 residues coordinate FMN: K217 and T245. Substrate is bound at residue 246–247; it reads NT. FMN contacts are provided by residues G268, G297, and 318-319; that span reads YS.

Belongs to the dihydroorotate dehydrogenase family. Type 2 subfamily. Monomer. FMN is required as a cofactor.

It is found in the cell membrane. It catalyses the reaction (S)-dihydroorotate + a quinone = orotate + a quinol. Its pathway is pyrimidine metabolism; UMP biosynthesis via de novo pathway; orotate from (S)-dihydroorotate (quinone route): step 1/1. Catalyzes the conversion of dihydroorotate to orotate with quinone as electron acceptor. The sequence is that of Dihydroorotate dehydrogenase (quinone) from Flavobacterium lutescens.